A 436-amino-acid chain; its full sequence is MVLPTVAIVGRPNVGKSTLFNRIAGERISIVEDVEGVTRDRIYTTGEWLNRKFSLIDTGGIDDVDAPFMEQIKHQADIAMTEADVIVFVVSGKEGVTDADEYVSLILYKTNKPVILAVNKVDNPEMRNDIYDFYSLGLGDPYPLSSVHGIGTGDILDAIVENLPVEEENENPDIIRFSLIGRPNVGKSSLINAILGEDRVIASPVAGTTRDAIDTNFVDSQGQEYTMIDTAGMRKSGKVYENTEKYSVMRSMRAIDRSDVVLMVINAEEGIREYDKRIAGFAHEAGKGIIIVVNKWDTIEKDSHTVSQWEADIRDNFQFLSYAPIIFVSAETKQRLHKLPDMIKRISESQNKRIPSAVLNDVIMDAIAINPTPTDKGKRLKIFYATQVAVKPPTFVVFVNEEELMHFSYLRFLENQIREAFVFEGTPINLIARKRK.

2 consecutive EngA-type G domains span residues 4–167 (PTVA…PVEE) and 175–351 (IRFS…ESQN). GTP-binding positions include 10–17 (GRPNVGKS), 57–61 (DTGGI), 119–122 (NKVD), 181–188 (GRPNVGKS), 229–233 (DTAGM), and 294–297 (NKWD). The region spanning 352–436 (KRIPSAVLND…PINLIARKRK (85 aa)) is the KH-like domain.

The protein belongs to the TRAFAC class TrmE-Era-EngA-EngB-Septin-like GTPase superfamily. EngA (Der) GTPase family. In terms of assembly, associates with the 50S ribosomal subunit.

Its function is as follows. GTPase that plays an essential role in the late steps of ribosome biogenesis. This is GTPase Der from Streptococcus agalactiae serotype III (strain NEM316).